We begin with the raw amino-acid sequence, 1011 residues long: DNA-directed RNA polymerase subunit beta'' (1011 aa).

Residues Cys216, Cys282, Cys288, and Cys291 each contribute to the Zn(2+) site.

The protein belongs to the RNA polymerase beta' chain family. RpoC2 subfamily. In plastids the minimal PEP RNA polymerase catalytic core is composed of four subunits: alpha, beta, beta', and beta''. When a (nuclear-encoded) sigma factor is associated with the core the holoenzyme is formed, which can initiate transcription. It depends on Zn(2+) as a cofactor.

The protein localises to the plastid. It localises to the chloroplast. The enzyme catalyses RNA(n) + a ribonucleoside 5'-triphosphate = RNA(n+1) + diphosphate. Its function is as follows. DNA-dependent RNA polymerase catalyzes the transcription of DNA into RNA using the four ribonucleoside triphosphates as substrates. This chain is DNA-directed RNA polymerase subunit beta'', found in Ostreococcus tauri.